Here is an 82-residue protein sequence, read N- to C-terminus: Small ribosomal subunit protein eS21y (82 aa).

Met1 is modified (N-acetylmethionine).

Belongs to the eukaryotic ribosomal protein eS21 family.

The chain is Small ribosomal subunit protein eS21y (RPS21C) from Arabidopsis thaliana (Mouse-ear cress).